The following is a 245-amino-acid chain: Cell division protein ZapD (245 aa).

Belongs to the ZapD family. Interacts with FtsZ.

It is found in the cytoplasm. Cell division factor that enhances FtsZ-ring assembly. Directly interacts with FtsZ and promotes bundling of FtsZ protofilaments, with a reduction in FtsZ GTPase activity. This chain is Cell division protein ZapD, found in Photobacterium profundum (strain SS9).